Reading from the N-terminus, the 122-residue chain is Hydrogenase maturation factor HypA (122 aa).

His-2 lines the Ni(2+) pocket. Zn(2+) is bound by residues Cys-73, Cys-75, Cys-95, and Cys-98.

It belongs to the HypA/HybF family.

Its function is as follows. Involved in the maturation of [NiFe] hydrogenases. Required for nickel insertion into the metal center of the hydrogenase. The protein is Hydrogenase maturation factor HypA of Methanothermobacter thermautotrophicus (strain ATCC 29096 / DSM 1053 / JCM 10044 / NBRC 100330 / Delta H) (Methanobacterium thermoautotrophicum).